Consider the following 185-residue polypeptide: Ribosome-recycling factor (185 aa).

This sequence belongs to the RRF family.

It localises to the cytoplasm. In terms of biological role, responsible for the release of ribosomes from messenger RNA at the termination of protein biosynthesis. May increase the efficiency of translation by recycling ribosomes from one round of translation to another. The protein is Ribosome-recycling factor of Parafrankia sp. (strain EAN1pec).